The following is a 120-amino-acid chain: Large ribosomal subunit protein uL22 (120 aa).

This sequence belongs to the universal ribosomal protein uL22 family. As to quaternary structure, part of the 50S ribosomal subunit.

Its function is as follows. This protein binds specifically to 23S rRNA; its binding is stimulated by other ribosomal proteins, e.g. L4, L17, and L20. It is important during the early stages of 50S assembly. It makes multiple contacts with different domains of the 23S rRNA in the assembled 50S subunit and ribosome. Functionally, the globular domain of the protein is located near the polypeptide exit tunnel on the outside of the subunit, while an extended beta-hairpin is found that lines the wall of the exit tunnel in the center of the 70S ribosome. The polypeptide is Large ribosomal subunit protein uL22 (Corynebacterium kroppenstedtii (strain DSM 44385 / JCM 11950 / CIP 105744 / CCUG 35717)).